The following is a 472-amino-acid chain: 3-isopropylmalate dehydratase large subunit (472 aa).

Residues C347, C407, and C410 each contribute to the [4Fe-4S] cluster site.

The protein belongs to the aconitase/IPM isomerase family. LeuC type 1 subfamily. Heterodimer of LeuC and LeuD. Requires [4Fe-4S] cluster as cofactor.

It carries out the reaction (2R,3S)-3-isopropylmalate = (2S)-2-isopropylmalate. It functions in the pathway amino-acid biosynthesis; L-leucine biosynthesis; L-leucine from 3-methyl-2-oxobutanoate: step 2/4. Catalyzes the isomerization between 2-isopropylmalate and 3-isopropylmalate, via the formation of 2-isopropylmaleate. This chain is 3-isopropylmalate dehydratase large subunit, found in Opitutus terrae (strain DSM 11246 / JCM 15787 / PB90-1).